Reading from the N-terminus, the 389-residue chain is 1-deoxy-D-xylulose 5-phosphate reductoisomerase (389 aa).

Positions 10, 11, 12, 13, 38, and 122 each coordinate NADPH. Lys-123 contributes to the 1-deoxy-D-xylulose 5-phosphate binding site. Glu-124 contacts NADPH. A Mn(2+)-binding site is contributed by Asp-148. 1-deoxy-D-xylulose 5-phosphate is bound by residues Ser-149, Glu-150, Ser-173, and His-196. Glu-150 contributes to the Mn(2+) binding site. Gly-202 lines the NADPH pocket. Residues Ser-209, Asn-214, Lys-215, and Glu-218 each contribute to the 1-deoxy-D-xylulose 5-phosphate site. Glu-218 contacts Mn(2+).

The protein belongs to the DXR family. Mg(2+) serves as cofactor. Mn(2+) is required as a cofactor.

It catalyses the reaction 2-C-methyl-D-erythritol 4-phosphate + NADP(+) = 1-deoxy-D-xylulose 5-phosphate + NADPH + H(+). It functions in the pathway isoprenoid biosynthesis; isopentenyl diphosphate biosynthesis via DXP pathway; isopentenyl diphosphate from 1-deoxy-D-xylulose 5-phosphate: step 1/6. Functionally, catalyzes the NADPH-dependent rearrangement and reduction of 1-deoxy-D-xylulose-5-phosphate (DXP) to 2-C-methyl-D-erythritol 4-phosphate (MEP). The chain is 1-deoxy-D-xylulose 5-phosphate reductoisomerase from Wolbachia sp. subsp. Brugia malayi (strain TRS).